Reading from the N-terminus, the 115-residue chain is Holo-[acyl-carrier-protein] synthase (115 aa).

Positions 6 and 51 each coordinate Mg(2+).

It belongs to the P-Pant transferase superfamily. AcpS family. It depends on Mg(2+) as a cofactor.

It localises to the cytoplasm. The enzyme catalyses apo-[ACP] + CoA = holo-[ACP] + adenosine 3',5'-bisphosphate + H(+). Functionally, transfers the 4'-phosphopantetheine moiety from coenzyme A to a Ser of acyl-carrier-protein. The polypeptide is Holo-[acyl-carrier-protein] synthase (Campylobacter jejuni subsp. jejuni serotype O:6 (strain 81116 / NCTC 11828)).